Here is a 364-residue protein sequence, read N- to C-terminus: Long-wave-sensitive opsin 1 (364 aa).

Topologically, residues 1–52 are extracellular; it reads MAHTWGPQRLAGGQPQANFEESTQGSIFTYTNSNSTRDPFEGPNYHIAPRWV. Residue S22 is glycosylated (O-linked (GlcNAc) serine). N34 is a glycosylation site (N-linked (GlcNAc...) asparagine). Residues 53–77 traverse the membrane as a helical segment; that stretch reads YHLTSAWMVFVVIASVFTNGLVLAA. The Cytoplasmic portion of the chain corresponds to 78-89; that stretch reads TMRFKKLRHPLN. A helical membrane pass occupies residues 90–115; sequence WILVNLAIADLAETIIASTISVVNQM. Over 116-129 the chain is Extracellular; sequence YGYFVLGHPLCVVE. C126 and C203 form a disulfide bridge. A helical transmembrane segment spans residues 130–149; that stretch reads GYTVSLCGITGLWSLAIISW. Over 150-168 the chain is Cytoplasmic; the sequence is ERWMVVCKPFGNVRFDAKL. A helical membrane pass occupies residues 169–192; sequence ATAGIAFSWIWAAVWTAPPIFGWS. At 193-218 the chain is on the extracellular side; that stretch reads RYWPHGLKTSCGPDVFSGSSYPGVQS. The chain crosses the membrane as a helical span at residues 219–246; the sequence is YMIVLMITCCFIPLSVIILCYLQVWLAI. The Cytoplasmic portion of the chain corresponds to 247–268; the sequence is RAVAKQQKESESTQKAEKEVTR. A helical membrane pass occupies residues 269 to 292; sequence MVMVMIFAYCLCWGPYTFFACFAA. The Extracellular segment spans residues 293–300; the sequence is AHPGYAFH. A helical transmembrane segment spans residues 301–325; sequence PLVAALPAYFAKSATIYNPIIYVFM. K312 bears the N6-(retinylidene)lysine mark. Over 326 to 364 the chain is Cytoplasmic; that stretch reads NRQFRNCILQLFGKKVDDSSELSSVSKTEASSVSSVSPA.

It belongs to the G-protein coupled receptor 1 family. Opsin subfamily. Phosphorylated on some or all of the serine and threonine residues present in the C-terminal region. As to expression, the three color pigments are found in the cone photoreceptor cells.

It is found in the membrane. Visual pigments are the light-absorbing molecules that mediate vision. They consist of an apoprotein, opsin, covalently linked to cis-retinal. In Capra hircus (Goat), this protein is Long-wave-sensitive opsin 1 (OPN1LW).